Consider the following 688-residue polypeptide: Glycine--tRNA ligase beta subunit (688 aa).

It belongs to the class-II aminoacyl-tRNA synthetase family. In terms of assembly, tetramer of two alpha and two beta subunits.

It is found in the cytoplasm. The enzyme catalyses tRNA(Gly) + glycine + ATP = glycyl-tRNA(Gly) + AMP + diphosphate. The sequence is that of Glycine--tRNA ligase beta subunit from Listeria welshimeri serovar 6b (strain ATCC 35897 / DSM 20650 / CCUG 15529 / CIP 8149 / NCTC 11857 / SLCC 5334 / V8).